The primary structure comprises 419 residues: Gamma-glutamyl phosphate reductase (419 aa).

It belongs to the gamma-glutamyl phosphate reductase family.

It localises to the cytoplasm. It catalyses the reaction L-glutamate 5-semialdehyde + phosphate + NADP(+) = L-glutamyl 5-phosphate + NADPH + H(+). It participates in amino-acid biosynthesis; L-proline biosynthesis; L-glutamate 5-semialdehyde from L-glutamate: step 2/2. Functionally, catalyzes the NADPH-dependent reduction of L-glutamate 5-phosphate into L-glutamate 5-semialdehyde and phosphate. The product spontaneously undergoes cyclization to form 1-pyrroline-5-carboxylate. The sequence is that of Gamma-glutamyl phosphate reductase from Bordetella avium (strain 197N).